The following is a 387-amino-acid chain: MSKSYLMNTYGRFNVTFDKGEGTKLYDKDGNEYIDFVSGVAVNCLGHCNPSIVKAIEEQSSKLMHVSNYYWNENAMELTEILCKNSEFDKVFMCNSGTEAIEAGLKLARKYALLHGDENKKEIIYMDNSFHGRTMGALSVTGQPKYQESFKPLIGAVKSVKFNDLDDIKQKISSKTAAVIVEPIQGEGGIIPAKKEYLKLLRDLCDENNALLIFDEVQCGMGRVGSLFAYQKFEVVPDIVCIAKALGGGFPIGAMLAKESVASSFVPGDHGNTYGGNPLACAVAIAVLKELVDKKVVEINVNEKSKYLFDKLMTLKEKYKVINDVRGMGLLIGVEVACDVKKIINKCFESKLLLITAGKNVVRFLPPLNVSFEEIDKALGIFEESIK.

Pyridoxal 5'-phosphate contacts are provided by residues 97–98 (GT) and phenylalanine 130. Residue arginine 133 coordinates N(2)-acetyl-L-ornithine. 215-218 (DEVQ) lines the pyridoxal 5'-phosphate pocket. Residue lysine 244 is modified to N6-(pyridoxal phosphate)lysine. Threonine 273 contributes to the pyridoxal 5'-phosphate binding site.

It belongs to the class-III pyridoxal-phosphate-dependent aminotransferase family. ArgD subfamily. Homodimer. The cofactor is pyridoxal 5'-phosphate.

The protein resides in the cytoplasm. The catalysed reaction is N(2)-acetyl-L-ornithine + 2-oxoglutarate = N-acetyl-L-glutamate 5-semialdehyde + L-glutamate. It participates in amino-acid biosynthesis; L-arginine biosynthesis; N(2)-acetyl-L-ornithine from L-glutamate: step 4/4. This chain is Acetylornithine aminotransferase, found in Clostridium acetobutylicum (strain ATCC 824 / DSM 792 / JCM 1419 / IAM 19013 / LMG 5710 / NBRC 13948 / NRRL B-527 / VKM B-1787 / 2291 / W).